We begin with the raw amino-acid sequence, 146 residues long: Hemoglobin subunit beta (146 aa).

The Globin domain occupies 2-146 (QWSDSERTII…VVMFLGKQYH (145 aa)). His63 and His92 together coordinate heme b.

Belongs to the globin family. Heterotetramer of two alpha chains and two beta chains. Red blood cells.

Involved in oxygen transport from the lung to the various peripheral tissues. This Artedidraco orianae (Barbeled plunderfish) protein is Hemoglobin subunit beta (hbb).